The sequence spans 201 residues: Phospholipase D (201 aa).

A signal peptide spans 1 to 25 (MKRKNKKFTEIFIAFILGIAIGVLG). The 28-residue stretch at 142–169 (VPGIAHNKVIIIDKKKVITGSFNFTAAA) folds into the PLD phosphodiesterase domain. Catalysis depends on residues histidine 147, lysine 149, and aspartate 154.

Belongs to the phospholipase D family. In terms of assembly, homodimer.

It localises to the secreted. The catalysed reaction is a 1,2-diacyl-sn-glycero-3-phosphocholine + H2O = a 1,2-diacyl-sn-glycero-3-phosphate + choline + H(+). Functionally, could be a virulence factor. The sequence is that of Phospholipase D (pld) from Rickettsia bellii (strain RML369-C).